A 246-amino-acid chain; its full sequence is Mast cell protease 4 (246 aa).

Residues 1–18 (MQALLFLMALLLPSGAGA) form the signal peptide. A propeptide spans 19–20 (EE) (activation peptide). The 224-residue stretch at 21 to 244 (IIGGVESRPH…YVPWINRVIK (224 aa)) folds into the Peptidase S1 domain. Cysteines 50 and 66 form a disulfide. Residues histidine 65 and aspartate 109 each act as charge relay system in the active site. 2 cysteine pairs are disulfide-bonded: cysteine 143-cysteine 208 and cysteine 174-cysteine 187. The active-site Charge relay system is serine 202.

Belongs to the peptidase S1 family. Granzyme subfamily. As to quaternary structure, monomer. Interacts with iripin-2, a serine protease inhibitor from Ixodes ricinus saliva. As to expression, submucosal mast cells. In femoral muscle, detected in myocytes but not in mast cells.

Its activity is regulated as follows. Completely inhibited by serine protease inhibitors such as chymostatin, diisopropylfluorophosphate and phenylmethylsulfonyl fluoride, but not by p-tosyl-L-phenylalanine chloromethyl ketone, p-tosyl-L-lysine chloromethyl ketone, pepstatin, E-64, EDTA or o-phenanthroline. Also inhibited by lima bean trypsin inhibitor, soy bean trypsin inhibitor and human plasma alpha1-antichymotrypsin. Functionally, has chymotrypsin-like activity. Hydrolyzes the amide bonds of synthetic substrates having Tyr and Phe residues at the P1 position. Preferentially hydrolyzes the 'Tyr-4-|-Ile-5' bond of angiotensin I and the 'Phe-20-|-Ala-21' bond of amyloid beta-protein, and is less active towards the 'Phe-8-|-His-9' bond of angiotensin I and the 'Phe-4-|-Ala-5' and 'Tyr-10-|-Glu-11' bonds of amyloid beta-protein. Involved in thrombin regulation and fibronectin processing. The protein is Mast cell protease 4 (Mcpt4) of Mus musculus (Mouse).